Here is a 610-residue protein sequence, read N- to C-terminus: Aspartate--tRNA(Asp/Asn) ligase (610 aa).

Glutamate 177 serves as a coordination point for L-aspartate. The interval 201–204 is aspartate; that stretch reads QLFK. Arginine 223 contributes to the L-aspartate binding site. ATP contacts are provided by residues 223–225 and glutamine 232; that span reads RDE. An L-aspartate-binding site is contributed by histidine 461. Glutamate 499 contacts ATP. Residue arginine 506 coordinates L-aspartate. ATP is bound at residue 551–554; that stretch reads GVDR.

Belongs to the class-II aminoacyl-tRNA synthetase family. Type 1 subfamily. In terms of assembly, homodimer.

The protein resides in the cytoplasm. The enzyme catalyses tRNA(Asx) + L-aspartate + ATP = L-aspartyl-tRNA(Asx) + AMP + diphosphate. In terms of biological role, aspartyl-tRNA synthetase with relaxed tRNA specificity since it is able to aspartylate not only its cognate tRNA(Asp) but also tRNA(Asn). Reaction proceeds in two steps: L-aspartate is first activated by ATP to form Asp-AMP and then transferred to the acceptor end of tRNA(Asp/Asn). This is Aspartate--tRNA(Asp/Asn) ligase from Parasynechococcus marenigrum (strain WH8102).